The primary structure comprises 290 residues: Ribosomal RNA small subunit methyltransferase A (290 aa).

Residues Asn27, Leu29, Gly54, Glu75, Asp100, and Asn125 each coordinate S-adenosyl-L-methionine.

Belongs to the class I-like SAM-binding methyltransferase superfamily. rRNA adenine N(6)-methyltransferase family. RsmA subfamily.

Its subcellular location is the cytoplasm. The enzyme catalyses adenosine(1518)/adenosine(1519) in 16S rRNA + 4 S-adenosyl-L-methionine = N(6)-dimethyladenosine(1518)/N(6)-dimethyladenosine(1519) in 16S rRNA + 4 S-adenosyl-L-homocysteine + 4 H(+). Its function is as follows. Specifically dimethylates two adjacent adenosines (A1518 and A1519) in the loop of a conserved hairpin near the 3'-end of 16S rRNA in the 30S particle. May play a critical role in biogenesis of 30S subunits. The chain is Ribosomal RNA small subunit methyltransferase A from Streptococcus pneumoniae (strain CGSP14).